The following is a 462-amino-acid chain: Glutamate--tRNA ligase (462 aa).

A 'HIGH' region motif is present at residues 11–21 (PSPTGFIHLGN). The 'KMSKS' region signature appears at 243-247 (KMSKR). K246 contacts ATP.

Belongs to the class-I aminoacyl-tRNA synthetase family. Glutamate--tRNA ligase type 1 subfamily. Monomer.

The protein localises to the cytoplasm. The enzyme catalyses tRNA(Glu) + L-glutamate + ATP = L-glutamyl-tRNA(Glu) + AMP + diphosphate. Its function is as follows. Catalyzes the attachment of glutamate to tRNA(Glu) in a two-step reaction: glutamate is first activated by ATP to form Glu-AMP and then transferred to the acceptor end of tRNA(Glu). The protein is Glutamate--tRNA ligase of Albidiferax ferrireducens (strain ATCC BAA-621 / DSM 15236 / T118) (Rhodoferax ferrireducens).